A 181-amino-acid polypeptide reads, in one-letter code: Large ribosomal subunit protein uL5 (181 aa).

Belongs to the universal ribosomal protein uL5 family. As to quaternary structure, part of the 50S ribosomal subunit; part of the 5S rRNA/L5/L18/L25 subcomplex. Contacts the 5S rRNA and the P site tRNA. Forms a bridge to the 30S subunit in the 70S ribosome.

This is one of the proteins that bind and probably mediate the attachment of the 5S RNA into the large ribosomal subunit, where it forms part of the central protuberance. In the 70S ribosome it contacts protein S13 of the 30S subunit (bridge B1b), connecting the 2 subunits; this bridge is implicated in subunit movement. Contacts the P site tRNA; the 5S rRNA and some of its associated proteins might help stabilize positioning of ribosome-bound tRNAs. This chain is Large ribosomal subunit protein uL5, found in Rickettsia canadensis (strain McKiel).